Reading from the N-terminus, the 238-residue chain is Ribonuclease PH (238 aa).

Phosphate-binding positions include Arg-86 and 124-126 (GTR).

The protein belongs to the RNase PH family. In terms of assembly, homohexameric ring arranged as a trimer of dimers.

The enzyme catalyses tRNA(n+1) + phosphate = tRNA(n) + a ribonucleoside 5'-diphosphate. Functionally, phosphorolytic 3'-5' exoribonuclease that plays an important role in tRNA 3'-end maturation. Removes nucleotide residues following the 3'-CCA terminus of tRNAs; can also add nucleotides to the ends of RNA molecules by using nucleoside diphosphates as substrates, but this may not be physiologically important. Probably plays a role in initiation of 16S rRNA degradation (leading to ribosome degradation) during starvation. The sequence is that of Ribonuclease PH from Nitrosospira multiformis (strain ATCC 25196 / NCIMB 11849 / C 71).